Consider the following 501-residue polypeptide: MARCSNSMALLFSFGLLWLCSGVLGTDTEERLVEHLLDPSRYNKLIRPATNGSELVTVQLMVSLAQLISVHEREQIMTTNVWLTQEWEDYRLTWKPEDFDNMKKVRLPSKHIWLPDVVLYNNADGMYEVSFYSNAVVSYDGSIFWLPPAIYKSACKIEVKHFPFDQQNCTMKFRSWTYDRTEIDLVLKSDVASLDDFTPSGEWDIIALPGRRNENPDDSTYVDITYDFIIRRKPLFYTINLIIPCVLITSLAILVFYLPSDCGEKMTLCISVLLALTVFLLLISKIVPPTSLDVPLVGKYLMFTMVLVTFSIVTSVCVLNVHHRSPTTHTMAPWVKVVFLEKLPTLLFLQQPRHRCARQRLRLRRRQREREGAGTLFFREGPAADPCTCFVNPASMQGLAGAFQAEPAAAGLGRSMGPCSCGLREAVDGVRFIADHMRSEDDDQSVREDWKYVAMVIDRLFLWIFVFVCVFGTIGMFLQPLFQNYTATTFLHSDHSAPSSK.

Positions 1-25 (MARCSNSMALLFSFGLLWLCSGVLG) are cleaved as a signal peptide. At 26 to 238 (TDTEERLVEH…IIRRKPLFYT (213 aa)) the chain is on the extracellular side. N-linked (GlcNAc...) asparagine glycosylation is found at N51 and N168. C155 and C169 are disulfide-bonded. The helical transmembrane segment at 239–259 (INLIIPCVLITSLAILVFYLP) threads the bilayer. The Cytoplasmic portion of the chain corresponds to 260-267 (SDCGEKMT). Residues 268–288 (LCISVLLALTVFLLLISKIVP) form a helical membrane-spanning segment. Residues 289-300 (PTSLDVPLVGKY) lie on the Extracellular side of the membrane. A helical transmembrane segment spans residues 301–321 (LMFTMVLVTFSIVTSVCVLNV). Over 322-459 (HHRSPTTHTM…WKYVAMVIDR (138 aa)) the chain is Cytoplasmic. A helical transmembrane segment spans residues 460–480 (LFLWIFVFVCVFGTIGMFLQP).

It belongs to the ligand-gated ion channel (TC 1.A.9) family. Acetylcholine receptor (TC 1.A.9.1) subfamily. Beta-2/CHRNB2 sub-subfamily. Neuronal AChR is a heteropentamer composed of two different types of subunits: alpha and beta. CHRNB2/Beta-2 subunit can be combined to CHRNA2/alpha-2, CHRNA3/alpha-3 or CHRNA4/alpha-4, CHRNA5/alpha-5, CHRNA6/alpha-6 and CHRNB3/beta-3 to give rise to functional receptors. CHRNA2:CHRNB2 and CHRNA4:CHRNB2 nAChR complexes exist in two subtypes: LS (low agonist sensitivity) with a (CHRNA2/4)3:(CHRNB2)2 and HS (high agonist sensitivity) with a (CHRNA2/4)2:(CHRNB2)3 stoichiometry; the subtypes differ in their subunit binding interfaces which are involved in ligand binding. Cells produce predominantly an (CHRNA4)3:(CHRNB2)2 nAChR. The stoichiometric form (CHRNA4)2:(CHRNB2)3 expression is selectively up-regulated by nicotine and has lower single channel conductance and calcium permeability. Also part of the stoichiometric forms: (CHRNA4:CHRNB2)2:CHRNB3 or (CHRNA6:CHRNB2)2:CHRNB3. Can form heteropentamers with CHRNA7, mainly found in basal forebrain cholinergic neurons. Interacts with RIC3; which is required for proper folding and assembly. Interacts with LYPD6.

It localises to the synaptic cell membrane. It is found in the cell membrane. The catalysed reaction is K(+)(in) = K(+)(out). It carries out the reaction Na(+)(in) = Na(+)(out). It catalyses the reaction Ca(2+)(in) = Ca(2+)(out). With respect to regulation, activated by a myriad of ligands such as acetylcholine, cytisine, nicotine, choline and epibatidine. Channel potentiation by calcium is stoichiometry-selective, CHRNA4:CHRNB2 nACh receptor is achieved by calcium association with topographically distinct sites framed by anionic residues within the CHRNA4 subunit and between the CHRNA4 and CHRNB2 subunits. Oligomeric amyloid-beta protein 42 activates specifially CHRNA7:CHRNB2 nAchRs. nAChR activity is inhibited by the antagonist alpha-conotoxins BuIA, PnIA, PnIC, GID and MII, small disulfide-constrained peptides from cone snails. Functionally, component of neuronal acetylcholine receptors (nAChRs) that function as pentameric, ligand-gated cation channels with high calcium permeability among other activities. nAChRs are excitatory neurotrasnmitter receptors formed by a collection of nAChR subunits known to mediate synaptic transmission in the nervous system and the neuromuscular junction. Each nAchR subunit confers differential attributes to channel properties, including activation, deactivation and desensitization kinetics, pH sensitivity, cation permeability, and binding to allosteric modulators. CHRNB2 forms heteropentameric neuronal acetylcholine receptors with CHRNA2, CHRNA3, CHRNA4 and CHRNA6, as well as CHRNA5 and CHRNB3 as accesory subunits. Found in two major stoichiometric forms,(CHRNA4)3:(CHRNB2)2 and (CHRNA4)2:(CHRNB2)3, the two stoichiometric forms differ in their unitary conductance, calcium permeability, ACh sensitivity and potentiation by divalent cation. Heteropentameric channels with CHRNA6 and CHRNA4 exhibit high sensitivity to ACh and nicotine and are predominantly expressed in only a few brain areas, including dopaminergic neurons, norepirephrine neurons and cells of the visual system. nAChrs containing CHRNA6 subunits mediate endogenous cholinergic modulation of dopamine and gamma-aminobutyric acid (GABA) release in response to nicotine at nerve terminals. Also forms functional nAChRs with other subunits such as CHRNA7:CHRNB2, mainly expressed in basal forebrain cholinergic neurons. The chain is Neuronal acetylcholine receptor subunit beta-2 (Chrnb2) from Mus musculus (Mouse).